The primary structure comprises 173 residues: Ribulose bisphosphate carboxylase small subunit, chloroplastic 3 (173 aa).

The transit peptide at 1–49 (MASIPATVATVAQANMVAPFTGLKSNAAFPVTKKVNDFSTLPSNGGRVQ) directs the protein to the chloroplast.

The protein belongs to the RuBisCO small chain family. As to quaternary structure, heterohexadecamer of 8 large and 8 small subunits.

The protein localises to the plastid. It is found in the chloroplast. Functionally, ruBisCO catalyzes two reactions: the carboxylation of D-ribulose 1,5-bisphosphate, the primary event in carbon dioxide fixation, as well as the oxidative fragmentation of the pentose substrate. Both reactions occur simultaneously and in competition at the same active site. Although the small subunit is not catalytic it is essential for maximal activity. This is Ribulose bisphosphate carboxylase small subunit, chloroplastic 3 from Flaveria pringlei.